The following is a 346-amino-acid chain: MSTAPVTLALMKEILGRVAVGASLSETQAEEVFEIIMSGDATPAQIGGLLLGLRVRGETVEEITGAARIMRAKALKIEAPPGSVDIVGTGGDEAGTFNISTAASFVVAACGVPVAKHGNRAVSSKSGASDVLTALGVNIDADFALVHETLWENKVGFLMAPRHHNAMRHVAGPRGELGTRTIFNLLGPLSNPAGTTRQVVGVFAERWVEPLARVLGRLGAEHAWVVHGTDGLDELTTTGPTRVAEYKGGEVRLFSVTPEEVGLKRAAPADLKGGDSATNAAAMKALLKGEQGAYRDIVVLNAAAALVVAGKVDTLGDGARAAEQAIDRGEAEAVLHRMIAITNRTS.

5-phospho-alpha-D-ribose 1-diphosphate-binding positions include Gly88, 91-92 (GD), Thr96, 98-101 (NIST), 116-124 (KHGNRAVSS), and Ala128. Gly88 is a binding site for anthranilate. Position 100 (Ser100) interacts with Mg(2+). Position 119 (Asn119) interacts with anthranilate. An anthranilate-binding site is contributed by Arg174. Asp233 and Glu234 together coordinate Mg(2+).

Belongs to the anthranilate phosphoribosyltransferase family. In terms of assembly, homodimer. The cofactor is Mg(2+).

The catalysed reaction is N-(5-phospho-beta-D-ribosyl)anthranilate + diphosphate = 5-phospho-alpha-D-ribose 1-diphosphate + anthranilate. It participates in amino-acid biosynthesis; L-tryptophan biosynthesis; L-tryptophan from chorismate: step 2/5. Functionally, catalyzes the transfer of the phosphoribosyl group of 5-phosphorylribose-1-pyrophosphate (PRPP) to anthranilate to yield N-(5'-phosphoribosyl)-anthranilate (PRA). This is Anthranilate phosphoribosyltransferase from Paramagnetospirillum magneticum (strain ATCC 700264 / AMB-1) (Magnetospirillum magneticum).